The primary structure comprises 130 residues: Small ribosomal subunit protein uS8 (130 aa).

The protein belongs to the universal ribosomal protein uS8 family. As to quaternary structure, part of the 30S ribosomal subunit.

Its function is as follows. One of the primary rRNA binding proteins, it binds directly to 16S rRNA central domain where it helps coordinate assembly of the platform of the 30S subunit. In Methanopyrus kandleri (strain AV19 / DSM 6324 / JCM 9639 / NBRC 100938), this protein is Small ribosomal subunit protein uS8.